The following is a 413-amino-acid chain: Tyrosine--tRNA ligase (413 aa).

L-tyrosine is bound at residue Tyr33. Residues 38 to 47 (PTADSLHVGH) carry the 'HIGH' region motif. The L-tyrosine site is built by Tyr162 and Gln166. The 'KMSKS' region motif lies at 225 to 229 (KFGKT). ATP is bound at residue Lys228. Positions 346–413 (TSAIDAIVNV…KKKYYLLEIK (68 aa)) constitute an S4 RNA-binding domain.

It belongs to the class-I aminoacyl-tRNA synthetase family. TyrS type 1 subfamily. In terms of assembly, homodimer.

It is found in the cytoplasm. The catalysed reaction is tRNA(Tyr) + L-tyrosine + ATP = L-tyrosyl-tRNA(Tyr) + AMP + diphosphate + H(+). Its function is as follows. Catalyzes the attachment of tyrosine to tRNA(Tyr) in a two-step reaction: tyrosine is first activated by ATP to form Tyr-AMP and then transferred to the acceptor end of tRNA(Tyr). The chain is Tyrosine--tRNA ligase from Mesoplasma florum (strain ATCC 33453 / NBRC 100688 / NCTC 11704 / L1) (Acholeplasma florum).